The chain runs to 64 residues: DNA gyrase inhibitor YacG (64 aa).

Residues cysteine 9, cysteine 12, cysteine 28, and cysteine 32 each contribute to the Zn(2+) site. Positions 42–64 are disordered; it reads DEENAIPGAPDMSDSDGWSEEQY. The segment covering 54–64 has biased composition (acidic residues); it reads SDSDGWSEEQY.

It belongs to the DNA gyrase inhibitor YacG family. As to quaternary structure, interacts with GyrB. The cofactor is Zn(2+).

Functionally, inhibits all the catalytic activities of DNA gyrase by preventing its interaction with DNA. Acts by binding directly to the C-terminal domain of GyrB, which probably disrupts DNA binding by the gyrase. In Vibrio vulnificus (strain YJ016), this protein is DNA gyrase inhibitor YacG.